We begin with the raw amino-acid sequence, 278 residues long: Sulfur carrier protein FdhD (278 aa).

The Cysteine persulfide intermediate role is filled by C121. F260 to R265 serves as a coordination point for Mo-bis(molybdopterin guanine dinucleotide).

It belongs to the FdhD family.

It localises to the cytoplasm. In terms of biological role, required for formate dehydrogenase (FDH) activity. Acts as a sulfur carrier protein that transfers sulfur from IscS to the molybdenum cofactor prior to its insertion into FDH. This chain is Sulfur carrier protein FdhD, found in Salmonella heidelberg (strain SL476).